The chain runs to 333 residues: Elongation factor Ts, mitochondrial (333 aa).

The N-terminal 17 residues, 1–17 (MLRTLRPTLPSRCLRLY), are a transit peptide targeting the mitochondrion.

The protein belongs to the EF-Ts family.

Its subcellular location is the mitochondrion. In terms of biological role, associates with the EF-Tu.GDP complex and induces the exchange of GDP to GTP. It remains bound to the aminoacyl-tRNA.EF-Tu.GTP complex up to the GTP hydrolysis stage on the ribosome. The sequence is that of Elongation factor Ts, mitochondrial from Coprinopsis cinerea (strain Okayama-7 / 130 / ATCC MYA-4618 / FGSC 9003) (Inky cap fungus).